Here is a 460-residue protein sequence, read N- to C-terminus: A-type ATP synthase subunit B (460 aa).

The protein belongs to the ATPase alpha/beta chains family. Has multiple subunits with at least A(3), B(3), C, D, E, F, H, I and proteolipid K(x).

The protein localises to the cell membrane. Functionally, component of the A-type ATP synthase that produces ATP from ADP in the presence of a proton gradient across the membrane. The B chain is a regulatory subunit. This chain is A-type ATP synthase subunit B, found in Thermofilum pendens (strain DSM 2475 / Hrk 5).